Here is a 470-residue protein sequence, read N- to C-terminus: Iron-sulfur cluster assembly SufBD family protein ABCI9 (470 aa).

This sequence belongs to the iron-sulfur cluster assembly SufBD family.

The chain is Iron-sulfur cluster assembly SufBD family protein ABCI9 (ABCI9) from Arabidopsis thaliana (Mouse-ear cress).